The sequence spans 253 residues: MNEQGEAINSSAESRIQLESSWKAHVGNWLLRPEMRDLSSFLRARKVAGVSVYPPGSQIFAAFEATPFQRVKAVILGQDPYHGQGQAHGLCFSVRPGMPLPPSLLNIYKELEEDLGLLRPDHGCLLPWANRGVLLLNAVLTVEDGRAGAHQGKGWEGFTDHVVDTLNREREGLVFMLWGSYAQAKGKVIDTRRHLVLKAPHPSPLSAHRGFLGCRHFSLCNQYLSQHGLGMVDWSLPPCIALDGAILNGRIAV.

The Proton acceptor role is filled by aspartate 79.

This sequence belongs to the uracil-DNA glycosylase (UDG) superfamily. UNG family.

It localises to the cytoplasm. It carries out the reaction Hydrolyzes single-stranded DNA or mismatched double-stranded DNA and polynucleotides, releasing free uracil.. Its function is as follows. Excises uracil residues from the DNA which can arise as a result of misincorporation of dUMP residues by DNA polymerase or due to deamination of cytosine. The sequence is that of Uracil-DNA glycosylase from Xylella fastidiosa (strain M12).